Here is a 296-residue protein sequence, read N- to C-terminus: MTKEKIIVIVGPTAVGKTALGIALAGAFNGEIISGDSQQVYRHLDIGTAKASAREQALAVHHLIDIREVTESYSAFDFVQDAKRAIEDIVSRGKLPIIVGGTGLYLQSLLEGYHLGGDLDQKELLAYRQQLETLTDTELYQLLASKGIHLDQVNRRRAIRSLELNQFARDLKNQEAPYNPLMIGLTDEREVIYERINKRVDLMMASGLLEEARWLFEQYPAVQASRGIGYKELFPYFQGQASLEEATATLKQQTRRFAKRQLTWFRNRMAVRFDSISESSYPQAIYDRVERFLKEP.

11–18 (GPTAVGKT) lines the ATP pocket. Substrate is bound at residue 13–18 (TAVGKT). An interaction with substrate tRNA region spans residues 36–39 (DSQQ).

The protein belongs to the IPP transferase family. In terms of assembly, monomer. Requires Mg(2+) as cofactor.

It catalyses the reaction adenosine(37) in tRNA + dimethylallyl diphosphate = N(6)-dimethylallyladenosine(37) in tRNA + diphosphate. In terms of biological role, catalyzes the transfer of a dimethylallyl group onto the adenine at position 37 in tRNAs that read codons beginning with uridine, leading to the formation of N6-(dimethylallyl)adenosine (i(6)A). This Streptococcus equi subsp. zooepidemicus (strain H70) protein is tRNA dimethylallyltransferase.